The sequence spans 200 residues: GTP cyclohydrolase-2 (200 aa).

GTP is bound at residue 49–53; sequence RVHSE. Residues cysteine 54, cysteine 65, and cysteine 67 each contribute to the Zn(2+) site. GTP-binding positions include glutamine 70, 92–94, and threonine 114; that span reads EGR. Residue aspartate 126 is the Proton acceptor of the active site. Catalysis depends on arginine 128, which acts as the Nucleophile. The GTP site is built by threonine 149 and lysine 154.

The protein belongs to the GTP cyclohydrolase II family. Homodimer. Zn(2+) is required as a cofactor.

The enzyme catalyses GTP + 4 H2O = 2,5-diamino-6-hydroxy-4-(5-phosphoribosylamino)-pyrimidine + formate + 2 phosphate + 3 H(+). It participates in cofactor biosynthesis; riboflavin biosynthesis; 5-amino-6-(D-ribitylamino)uracil from GTP: step 1/4. Functionally, catalyzes the conversion of GTP to 2,5-diamino-6-ribosylamino-4(3H)-pyrimidinone 5'-phosphate (DARP), formate and pyrophosphate. The chain is GTP cyclohydrolase-2 from Klebsiella pneumoniae subsp. pneumoniae (strain ATCC 700721 / MGH 78578).